Consider the following 374-residue polypeptide: Aminodeoxychorismate lyase (374 aa).

Belongs to the class-IV pyridoxal-phosphate-dependent aminotransferase family. As to quaternary structure, homodimer. Pyridoxal 5'-phosphate is required as a cofactor.

The protein localises to the cytoplasm. It carries out the reaction 4-amino-4-deoxychorismate = 4-aminobenzoate + pyruvate + H(+). The protein operates within cofactor biosynthesis; tetrahydrofolate biosynthesis; 4-aminobenzoate from chorismate: step 2/2. Converts 4-amino-4-deoxychorismate into 4-aminobenzoate (PABA) and pyruvate. The sequence is that of Aminodeoxychorismate lyase (ABZ2) from Saccharomyces cerevisiae (strain ATCC 204508 / S288c) (Baker's yeast).